The following is an 81-amino-acid chain: UPF0180 protein BLi01634/BL05144 (81 aa).

It belongs to the UPF0180 family.

This chain is UPF0180 protein BLi01634/BL05144, found in Bacillus licheniformis (strain ATCC 14580 / DSM 13 / JCM 2505 / CCUG 7422 / NBRC 12200 / NCIMB 9375 / NCTC 10341 / NRRL NRS-1264 / Gibson 46).